A 712-amino-acid polypeptide reads, in one-letter code: Patatin-like phospholipase domain-containing protein ACLA_029670 (712 aa).

Positions 1 to 10 (MTSAEKSATR) are enriched in polar residues. The tract at residues 1–20 (MTSAEKSATRNIYDPSALPD) is disordered. Residues 85–105 (WPFLFIVFAWITVLGIAYALT) form a helical membrane-spanning segment. The region spanning 275 to 466 (LCLSGGATFA…RTDIPIKALN (192 aa)) is the PNPLA domain. A GXSXG motif is present at residues 306 to 310 (GTSGG). Ser308 acts as the Nucleophile in catalysis. Catalysis depends on Asp453, which acts as the Proton acceptor. Residues 649–664 (FPERHSDYKDESHYTE) show a composition bias toward basic and acidic residues. The segment at 649–686 (FPERHSDYKDESHYTEVSDSLSTNSSRPHTPDARRGSI) is disordered. Residues 665–676 (VSDSLSTNSSRP) are compositionally biased toward polar residues. The segment covering 677–686 (HTPDARRGSI) has biased composition (basic and acidic residues).

Belongs to the PLPL family.

The protein resides in the membrane. Probable lipid hydrolase. This Aspergillus clavatus (strain ATCC 1007 / CBS 513.65 / DSM 816 / NCTC 3887 / NRRL 1 / QM 1276 / 107) protein is Patatin-like phospholipase domain-containing protein ACLA_029670.